Consider the following 193-residue polypeptide: NADH-quinone oxidoreductase subunit B (193 aa).

4 residues coordinate [4Fe-4S] cluster: cysteine 72, cysteine 73, cysteine 137, and cysteine 167.

Belongs to the complex I 20 kDa subunit family. As to quaternary structure, NDH-1 is composed of 14 different subunits. Subunits NuoB, C, D, E, F, and G constitute the peripheral sector of the complex. It depends on [4Fe-4S] cluster as a cofactor.

Its subcellular location is the cell inner membrane. The catalysed reaction is a quinone + NADH + 5 H(+)(in) = a quinol + NAD(+) + 4 H(+)(out). Functionally, NDH-1 shuttles electrons from NADH, via FMN and iron-sulfur (Fe-S) centers, to quinones in the respiratory chain. The immediate electron acceptor for the enzyme in this species is believed to be ubiquinone. Couples the redox reaction to proton translocation (for every two electrons transferred, four hydrogen ions are translocated across the cytoplasmic membrane), and thus conserves the redox energy in a proton gradient. This Bartonella quintana (strain Toulouse) (Rochalimaea quintana) protein is NADH-quinone oxidoreductase subunit B.